The chain runs to 341 residues: S-adenosylmethionine:tRNA ribosyltransferase-isomerase (341 aa).

The protein belongs to the QueA family. In terms of assembly, monomer.

Its subcellular location is the cytoplasm. It catalyses the reaction 7-aminomethyl-7-carbaguanosine(34) in tRNA + S-adenosyl-L-methionine = epoxyqueuosine(34) in tRNA + adenine + L-methionine + 2 H(+). The protein operates within tRNA modification; tRNA-queuosine biosynthesis. Functionally, transfers and isomerizes the ribose moiety from AdoMet to the 7-aminomethyl group of 7-deazaguanine (preQ1-tRNA) to give epoxyqueuosine (oQ-tRNA). This Desulfitobacterium hafniense (strain DSM 10664 / DCB-2) protein is S-adenosylmethionine:tRNA ribosyltransferase-isomerase.